The following is a 233-amino-acid chain: Nickel import system ATP-binding protein NikE (233 aa).

An ABC transporter domain is found at 2–228 (IELKHVTFGY…DRHPYTKELV (227 aa)). 35-42 (GESGCGKS) is an ATP binding site.

This sequence belongs to the ABC transporter superfamily. The complex is composed of two ATP-binding proteins (NikD and NikE), two transmembrane proteins (NikB and NikC) and a solute-binding protein (NikA).

Its subcellular location is the cell membrane. It catalyses the reaction Ni(2+)(out) + ATP + H2O = Ni(2+)(in) + ADP + phosphate + H(+). Its function is as follows. Part of the ABC transporter complex NikABCDE (Opp2) involved in nickel import. Probably responsible for energy coupling to the transport system. The chain is Nickel import system ATP-binding protein NikE from Staphylococcus aureus (strain MRSA252).